Consider the following 344-residue polypeptide: Ig alpha chain C region (344 aa).

The Ig-like 1 domain maps to 6 to 99; sequence PTIYPLTLPP…SNPVQELDVN (94 aa). 2 disulfide bridges follow: Cys-26-Cys-84 and Cys-76-Cys-100. 2 N-linked (GlcNAc...) asparagine glycosylation sites follow: Asn-38 and Asn-99. Ser-101 carries an O-linked (GalNAc) serine; in variant MOPC 47A glycan. 2 cysteine pairs are disulfide-bonded: Cys-114-Cys-171 and Cys-138-Cys-195. Ig-like domains lie at 116–206 and 219–321; these read PSLS…GTLT and PQVH…KTID. N-linked (GlcNAc...) asparagine glycosylation occurs at Asn-329. An N-linked (GlcNAc...) asparagine; in variant M511 glycan is attached at Ser-331.

Functionally, ig alpha is the major immunoglobulin class in body secretions. It may serve both to defend against local infection and to prevent access of foreign antigens to the general immunologic system. This Mus musculus (Mouse) protein is Ig alpha chain C region.